The primary structure comprises 424 residues: 3-phosphoshikimate 1-carboxyvinyltransferase (424 aa).

3-phosphoshikimate-binding residues include Lys-21, Ser-22, and Arg-26. Lys-21 serves as a coordination point for phosphoenolpyruvate. Phosphoenolpyruvate contacts are provided by Gly-92 and Arg-120. The 3-phosphoshikimate site is built by Ser-163, Ser-164, Gln-165, Ser-191, Asp-306, and Lys-333. Residue Gln-165 coordinates phosphoenolpyruvate. Asp-306 serves as the catalytic Proton acceptor. Residues Arg-337, Arg-379, and Lys-405 each contribute to the phosphoenolpyruvate site.

It belongs to the EPSP synthase family. Monomer.

The protein localises to the cytoplasm. The catalysed reaction is 3-phosphoshikimate + phosphoenolpyruvate = 5-O-(1-carboxyvinyl)-3-phosphoshikimate + phosphate. Its pathway is metabolic intermediate biosynthesis; chorismate biosynthesis; chorismate from D-erythrose 4-phosphate and phosphoenolpyruvate: step 6/7. Catalyzes the transfer of the enolpyruvyl moiety of phosphoenolpyruvate (PEP) to the 5-hydroxyl of shikimate-3-phosphate (S3P) to produce enolpyruvyl shikimate-3-phosphate and inorganic phosphate. The protein is 3-phosphoshikimate 1-carboxyvinyltransferase of Clostridium perfringens (strain 13 / Type A).